The primary structure comprises 294 residues: Shikimate kinase (294 aa).

87–97 (PLAGGLKSSSA) is a binding site for ATP.

Belongs to the GHMP kinase family. Archaeal shikimate kinase subfamily.

It localises to the cytoplasm. It catalyses the reaction shikimate + ATP = 3-phosphoshikimate + ADP + H(+). The protein operates within metabolic intermediate biosynthesis; chorismate biosynthesis; chorismate from D-erythrose 4-phosphate and phosphoenolpyruvate: step 5/7. In Methanosarcina acetivorans (strain ATCC 35395 / DSM 2834 / JCM 12185 / C2A), this protein is Shikimate kinase (aroK).